Reading from the N-terminus, the 192-residue chain is Vascular endothelial growth factor A (192 aa).

Positions 1–26 are cleaved as a signal peptide; it reads MNFLLSWIHWGLAALLYFHNAKVLQA. Disulfide bonds link Cys-52-Cys-94, Cys-83-Cys-128, and Cys-87-Cys-130. N-linked (GlcNAc...) asparagine glycosylation occurs at Asn-101.

The protein belongs to the PDGF/VEGF growth factor family. In terms of assembly, homodimer; disulfide-linked. Also found as heterodimer with PGF Interacts with FLT1/VEGFR1 and KDR/VEGFR2 receptors, heparan sulfate and heparin. Expressed by the venom gland, and probably other tissues.

Its subcellular location is the secreted. In terms of biological role, growth factor active in angiogenesis, vasculogenesis and endothelial cell growth. Induces endothelial cell proliferation, promotes cell migration, inhibits apoptosis and induces permeabilization of blood vessels. This Vipera ammodytes ammodytes (Western sand viper) protein is Vascular endothelial growth factor A.